A 119-amino-acid chain; its full sequence is Probable non-functional T cell receptor gamma variable 11 (119 aa).

The first 18 residues, 1 to 18 (MPLVVAVIFFSLWVFALG), serve as a signal peptide directing secretion. Positions 23–119 (PEISISRPAN…VYHCACWIRH (97 aa)) constitute an Ig-like domain. A glycan (N-linked (GlcNAc...) asparagine) is linked at Asn-32.

Most probably, the gamma-delta TR is not assembled due to incorrect folding of the gamma chain. Gamma-delta TR is a heterodimer composed of a gamma and delta chain; disulfide-linked. The gamma-delta TR is associated with the transmembrane signaling CD3 coreceptor proteins following the stoichiometry: a single gamma-delta TR heterodimer associates with one CD3D-CD3E heterodimer, one CD3G-CD3E heterodimer and one CD247 homodimer forming a stable octameric structure. Upon activation, gamma-delta TR complex associates with FCER1G to initiate intracellular signaling.

The protein resides in the cell membrane. Its function is as follows. Probable non-functional open reading frame (ORF) of V region of the variable domain of T cell receptor (TR) gamma chain. Non-functional ORF generally cannot participate in the synthesis of a productive T cell receptor (TR) chain due to altered V-(D)-J or switch recombination and/or splicing site (at mRNA level) and/or conserved amino acid change (protein level). Gamma-delta TRs recognize a variety of self and foreign non-peptide antigens frequently expressed at the epithelial boundaries between the host and external environment, including endogenous lipids presented by MH-like protein CD1D and phosphoantigens presented by butyrophilin-like molecule BTN3A1. Upon antigen recognition induces rapid, innate-like immune responses involved in pathogen clearance and tissue repair. Binding of gamma-delta TR complex to antigen triggers phosphorylation of immunoreceptor tyrosine-based activation motifs (ITAMs) in the CD3 chains by the LCK and FYN kinases, allowing the recruitment, phosphorylation, and activation of ZAP70 that facilitates phosphorylation of the scaffolding proteins LCP2 and LAT. This lead to the formation of a supramolecular signalosome that recruits the phospholipase PLCG1, resulting in calcium mobilization and ERK activation, ultimately leading to T cell expansion and differentiation into effector cells. Gamma-delta TRs are produced through somatic rearrangement of a limited repertoire of variable (V), diversity (D), and joining (J) genes. The potential diversity of gamma-delta TRs is conferred by the unique ability to rearrange (D) genes in tandem and to utilize all three reading frames. The combinatorial diversity is considerably increased by the sequence exonuclease trimming and random nucleotide (N) region additions which occur during the V-(D)-J rearrangements. The polypeptide is Probable non-functional T cell receptor gamma variable 11 (Homo sapiens (Human)).